A 71-amino-acid polypeptide reads, in one-letter code: uncharacterized protein (71 aa).

The chain crosses the membrane as a helical span at residues 2 to 24 (IIAIVAVVIFLLNFLTPYGYMPM). Residues 48–71 (PAESSSNGGSMITKPSTGACQGGR) form a disordered region. The segment covering 49–71 (AESSSNGGSMITKPSTGACQGGR) has biased composition (polar residues).

It localises to the membrane. This is an uncharacterized protein from Archaeoglobus fulgidus (strain ATCC 49558 / DSM 4304 / JCM 9628 / NBRC 100126 / VC-16).